Reading from the N-terminus, the 215-residue chain is MSNETKQPEQGEEYLVPVERYMAAAVRLGARVSNNYLQERGFIFSVRPDGLRIFNLKRIDERIRIAARMITRYPPSRVMVHSTKPYAFKPIQMFCKFVGCLPVTGRLIPGTLTNPYLTHHIDIDLLMVADPKTDFQAINEASLTGIPVIALVDTDSDPTFIDLMIPCNNKGRNSLALVFWLLARQVLRERGELKPNEDLPVSWEEFRVPVGQSRS.

This sequence belongs to the universal ribosomal protein uS2 family.

The polypeptide is Small ribosomal subunit protein uS2 (Caldivirga maquilingensis (strain ATCC 700844 / DSM 13496 / JCM 10307 / IC-167)).